We begin with the raw amino-acid sequence, 92 residues long: Small ribosomal subunit protein uS15c (92 aa).

It belongs to the universal ribosomal protein uS15 family. Part of the 30S ribosomal subunit.

The protein localises to the plastid. Its subcellular location is the chloroplast. This Guizotia abyssinica (Niger) protein is Small ribosomal subunit protein uS15c (rps15).